Consider the following 259-residue polypeptide: 14-3-3-like protein GF14 omega (259 aa).

3 positions are modified to phosphoserine: Ser67, Ser109, and Ser190. Thr211 bears the Phosphothreonine mark.

The protein belongs to the 14-3-3 family. Interacts with CINV1.

It is found in the nucleus. The protein resides in the cytoplasm. Is associated with a DNA binding complex that binds to the G box, a well-characterized cis-acting DNA regulatory element found in plant genes. This is 14-3-3-like protein GF14 omega (GRF2) from Arabidopsis thaliana (Mouse-ear cress).